The following is a 148-amino-acid chain: Large ribosomal subunit protein bL9 (148 aa).

It belongs to the bacterial ribosomal protein bL9 family.

In terms of biological role, binds to the 23S rRNA. This Hydrogenobaculum sp. (strain Y04AAS1) protein is Large ribosomal subunit protein bL9.